Reading from the N-terminus, the 245-residue chain is 4-hydroxy-tetrahydrodipicolinate reductase (245 aa).

NAD(+) contacts are provided by residues 7–12 (GAKGKV), 75–77 (GTT), and 102–105 (APNF). H132 acts as the Proton donor/acceptor in catalysis. H133 contacts (S)-2,3,4,5-tetrahydrodipicolinate. The active-site Proton donor is K136. A (S)-2,3,4,5-tetrahydrodipicolinate-binding site is contributed by 142–143 (GT).

The protein belongs to the DapB family.

Its subcellular location is the cytoplasm. It catalyses the reaction (S)-2,3,4,5-tetrahydrodipicolinate + NAD(+) + H2O = (2S,4S)-4-hydroxy-2,3,4,5-tetrahydrodipicolinate + NADH + H(+). The catalysed reaction is (S)-2,3,4,5-tetrahydrodipicolinate + NADP(+) + H2O = (2S,4S)-4-hydroxy-2,3,4,5-tetrahydrodipicolinate + NADPH + H(+). The protein operates within amino-acid biosynthesis; L-lysine biosynthesis via DAP pathway; (S)-tetrahydrodipicolinate from L-aspartate: step 4/4. Catalyzes the conversion of 4-hydroxy-tetrahydrodipicolinate (HTPA) to tetrahydrodipicolinate. The protein is 4-hydroxy-tetrahydrodipicolinate reductase of Mycobacterium tuberculosis (strain ATCC 25177 / H37Ra).